The primary structure comprises 146 residues: DNA-directed RNA polymerases II, IV and V subunit 8B (146 aa).

This sequence belongs to the eukaryotic RPB8 RNA polymerase subunit family. In terms of assembly, component of the RNA polymerase II, IV and V complexes. Associates with the mediator complex.

The protein resides in the nucleus. DNA-dependent RNA polymerase catalyzes the transcription of DNA into RNA using the four ribonucleoside triphosphates as substrates. Component of RNA polymerase II which synthesizes mRNA precursors and many functional non-coding RNAs. Pol II is the central component of the basal RNA polymerase II transcription machinery. It is composed of mobile elements that move relative to each other. Component of RNA polymerases IV and V which mediate short-interfering RNAs (siRNA) accumulation and subsequent RNA-directed DNA methylation-dependent (RdDM) transcriptional gene silencing (TGS) of endogenous repeated sequences, including transposable elements. The chain is DNA-directed RNA polymerases II, IV and V subunit 8B (NRPB8B) from Arabidopsis thaliana (Mouse-ear cress).